Consider the following 295-residue polypeptide: Protoheme IX farnesyltransferase (295 aa).

Helical transmembrane passes span 9 to 29 (ITKPGIIFGNVLSVAGGFFLA), 36 to 56 (FGVFLAAVIGTSLVVASGCVF), 80 to 100 (LVSLKLALLYATLLGIAGVGL), 108 to 128 (LAALFAVIGFVIYVGLYSLYL), 135 to 155 (GTLVGSLSGAMPPVIGYCAVS), 163 to 183 (LTLLVMFSLWQMPHSYAIAIF), 209 to 229 (IMLYILAFLVATLMLTVGGYA), 230 to 250 (GLNYLAVAAGMGMYWLYMAWK), and 265 to 285 (FVFSIFTITALSVMMSVDFQV).

Belongs to the UbiA prenyltransferase family. Protoheme IX farnesyltransferase subfamily.

The protein localises to the cell inner membrane. It carries out the reaction heme b + (2E,6E)-farnesyl diphosphate + H2O = Fe(II)-heme o + diphosphate. It participates in porphyrin-containing compound metabolism; heme O biosynthesis; heme O from protoheme: step 1/1. Converts heme B (protoheme IX) to heme O by substitution of the vinyl group on carbon 2 of heme B porphyrin ring with a hydroxyethyl farnesyl side group. This chain is Protoheme IX farnesyltransferase, found in Pseudomonas syringae pv. syringae (strain B728a).